Here is a 196-residue protein sequence, read N- to C-terminus: Probable histone chaperone ASF1A (196 aa).

Over residues 146-157 (VTKFPIDFHPEE) the composition is skewed to basic and acidic residues. Residues 146-196 (VTKFPIDFHPEEEQTAATAAPPEQSDEQQPNVNGEAQVLPDQSVEPKPEES) form a disordered region.

Belongs to the ASF1 family. As to quaternary structure, interacts with histone H3 and histone H4. Component of the HIRA complex made of UBN1, UBN2, ASF1A, CABIN1 and HIRA. Interacts with HIRA. As to expression, expressed in leaves and flower buds.

Its subcellular location is the nucleus. The protein resides in the nucleolus. In terms of biological role, histone chaperone that facilitates histone deposition and histone exchange and removal during nucleosome assembly and disassembly. While encoded by a region of the Arabidopsis thaliana genome that is homologous to the Brassica S-locus for self incompatibility, this protein may not play the same role in Arabidopsis thaliana. The protein is Probable histone chaperone ASF1A (ASF1A) of Arabidopsis thaliana (Mouse-ear cress).